Here is a 242-residue protein sequence, read N- to C-terminus: uncharacterized protein (242 aa).

Positions 1–11 are enriched in low complexity; it reads MNFEAASAPSQ. The disordered stretch occupies residues 1–45; sequence MNFEAASAPSQQPSPTPAPKTEEPKENGGSEQQADQPENSKKDDV.

To U.parvum UU171.

This is an uncharacterized protein from Ureaplasma parvum serovar 3 (strain ATCC 700970).